Consider the following 432-residue polypeptide: Adenosylhomocysteinase (432 aa).

Ser-2 bears the N-acetylserine mark. Substrate-binding residues include Thr-57, Asp-131, and Glu-156. Residue Ser-183 is modified to Phosphoserine. The interval 183-350 (SVTKSKFDNL…EGRLVNLGCA (168 aa)) is NAD binding. Positions 186 and 190 each coordinate substrate. Position 186 is an N6-(2-hydroxyisobutyryl)lysine (Lys-186). Tyr-193 bears the Phosphotyrosine mark.

This sequence belongs to the adenosylhomocysteinase family. As to quaternary structure, homotetramer. Interaction with AHCYL1. It depends on NAD(+) as a cofactor.

The protein resides in the cytoplasm. It is found in the melanosome. Its subcellular location is the nucleus. The protein localises to the endoplasmic reticulum. It catalyses the reaction S-adenosyl-L-homocysteine + H2O = L-homocysteine + adenosine. The protein operates within amino-acid biosynthesis; L-homocysteine biosynthesis; L-homocysteine from S-adenosyl-L-homocysteine: step 1/1. Its function is as follows. Catalyzes the hydrolysis of S-adenosyl-L-homocysteine to form adenosine and homocysteine. Binds copper ions. The protein is Adenosylhomocysteinase (AHCY) of Bos taurus (Bovine).